Here is a 189-residue protein sequence, read N- to C-terminus: Transcription factor FapR (189 aa).

This sequence belongs to the FapR family.

Functionally, transcriptional factor involved in regulation of membrane lipid biosynthesis by repressing genes involved in fatty acid and phospholipid metabolism. The chain is Transcription factor FapR from Listeria monocytogenes serotype 4b (strain CLIP80459).